We begin with the raw amino-acid sequence, 157 residues long: Crossover junction endodeoxyribonuclease RuvC (157 aa).

Active-site residues include aspartate 7, glutamate 70, and aspartate 142. The Mg(2+) site is built by aspartate 7, glutamate 70, and aspartate 142.

Belongs to the RuvC family. As to quaternary structure, homodimer which binds Holliday junction (HJ) DNA. The HJ becomes 2-fold symmetrical on binding to RuvC with unstacked arms; it has a different conformation from HJ DNA in complex with RuvA. In the full resolvosome a probable DNA-RuvA(4)-RuvB(12)-RuvC(2) complex forms which resolves the HJ. Mg(2+) serves as cofactor.

It localises to the cytoplasm. It carries out the reaction Endonucleolytic cleavage at a junction such as a reciprocal single-stranded crossover between two homologous DNA duplexes (Holliday junction).. The RuvA-RuvB-RuvC complex processes Holliday junction (HJ) DNA during genetic recombination and DNA repair. Endonuclease that resolves HJ intermediates. Cleaves cruciform DNA by making single-stranded nicks across the HJ at symmetrical positions within the homologous arms, yielding a 5'-phosphate and a 3'-hydroxyl group; requires a central core of homology in the junction. The consensus cleavage sequence is 5'-(A/T)TT(C/G)-3'. Cleavage occurs on the 3'-side of the TT dinucleotide at the point of strand exchange. HJ branch migration catalyzed by RuvA-RuvB allows RuvC to scan DNA until it finds its consensus sequence, where it cleaves and resolves the cruciform DNA. The sequence is that of Crossover junction endodeoxyribonuclease RuvC from Synechococcus sp. (strain RCC307).